The following is a 238-amino-acid chain: Pyridoxine 5'-phosphate synthase (238 aa).

Residue N9 coordinates 3-amino-2-oxopropyl phosphate. Position 11-12 (D11–H12) interacts with 1-deoxy-D-xylulose 5-phosphate. Position 20 (R20) interacts with 3-amino-2-oxopropyl phosphate. H45 (proton acceptor) is an active-site residue. 1-deoxy-D-xylulose 5-phosphate-binding residues include R47 and H52. E72 serves as the catalytic Proton acceptor. T102 lines the 1-deoxy-D-xylulose 5-phosphate pocket. Residue H189 is the Proton donor of the active site. Residues G190 and G211–H212 contribute to the 3-amino-2-oxopropyl phosphate site.

It belongs to the PNP synthase family. As to quaternary structure, homooctamer; tetramer of dimers.

It is found in the cytoplasm. The enzyme catalyses 3-amino-2-oxopropyl phosphate + 1-deoxy-D-xylulose 5-phosphate = pyridoxine 5'-phosphate + phosphate + 2 H2O + H(+). It functions in the pathway cofactor biosynthesis; pyridoxine 5'-phosphate biosynthesis; pyridoxine 5'-phosphate from D-erythrose 4-phosphate: step 5/5. Its function is as follows. Catalyzes the complicated ring closure reaction between the two acyclic compounds 1-deoxy-D-xylulose-5-phosphate (DXP) and 3-amino-2-oxopropyl phosphate (1-amino-acetone-3-phosphate or AAP) to form pyridoxine 5'-phosphate (PNP) and inorganic phosphate. This is Pyridoxine 5'-phosphate synthase from Ehrlichia canis (strain Jake).